Consider the following 98-residue polypeptide: Large ribosomal subunit protein uL23 (98 aa).

It belongs to the universal ribosomal protein uL23 family. Part of the 50S ribosomal subunit. Contacts protein L29, and trigger factor when it is bound to the ribosome.

Its function is as follows. One of the early assembly proteins it binds 23S rRNA. One of the proteins that surrounds the polypeptide exit tunnel on the outside of the ribosome. Forms the main docking site for trigger factor binding to the ribosome. This Cellvibrio japonicus (strain Ueda107) (Pseudomonas fluorescens subsp. cellulosa) protein is Large ribosomal subunit protein uL23.